The following is a 693-amino-acid chain: Elongation factor G (693 aa).

The tr-type G domain maps to 8-282 (AKTRNIGIMA…AVIDYLPSPL (275 aa)). GTP-binding positions include 17–24 (AHVDAGKT), 81–85 (DTPGH), and 135–138 (NKMD).

It belongs to the TRAFAC class translation factor GTPase superfamily. Classic translation factor GTPase family. EF-G/EF-2 subfamily.

It localises to the cytoplasm. Functionally, catalyzes the GTP-dependent ribosomal translocation step during translation elongation. During this step, the ribosome changes from the pre-translocational (PRE) to the post-translocational (POST) state as the newly formed A-site-bound peptidyl-tRNA and P-site-bound deacylated tRNA move to the P and E sites, respectively. Catalyzes the coordinated movement of the two tRNA molecules, the mRNA and conformational changes in the ribosome. This Streptococcus thermophilus (strain CNRZ 1066) protein is Elongation factor G.